Here is a 156-residue protein sequence, read N- to C-terminus: H/ACA ribonucleoprotein complex subunit 2-like protein (156 aa).

The protein belongs to the eukaryotic ribosomal protein eL8 family. Component of the small nucleolar ribonucleoprotein particle containing H/ACA-type snoRNAs (H/ACA snoRNPs).

The protein localises to the nucleus. It localises to the nucleolus. Functionally, required for ribosome biogenesis. Part of a complex which catalyzes pseudouridylation of rRNA. This involves the isomerization of uridine such that the ribose is subsequently attached to C5, instead of the normal N1. Pseudouridine ('psi') residues may serve to stabilize the conformation of rRNAs. This is H/ACA ribonucleoprotein complex subunit 2-like protein from Arabidopsis thaliana (Mouse-ear cress).